Here is a 60-residue protein sequence, read N- to C-terminus: UPF0434 protein mma_2578 (60 aa).

It belongs to the UPF0434 family.

The protein is UPF0434 protein mma_2578 of Janthinobacterium sp. (strain Marseille) (Minibacterium massiliensis).